A 442-amino-acid polypeptide reads, in one-letter code: MRVGSAVSPKVLKGFRDLLPDEEIERALLVEKLTVALRQMGFVPIDTPALEYTEVLLRKSEGDTEKQMFRFVDKGGRDVALRFDLTVPLARFVATHYARLYFPFKRYHFAKVWRGEKPQMGRYREFTQCDFDIVGSDSVCADFEILKSIRHMLYMAGAEHIRIHVAHRGLFDRFLRALSLSDQAEHILRIIDKRAKMAPHVLTAQLESLCDPVRVQKIMTYVSAGEVDGVAPSFEHTLSAIETLTGGVSEESTRLRKIYELLCAVNIQSSYVFDPSITRGFDYYTGMVCETFLTQLPHIGSVCSGGRYDHLTALYMKDAVSGVGASIGLDRLYAAFQQLGMSREHVCFVQALIFCQDSALMDVYQKLCSYFAVQVATEVFPDPRKLSQQYAFAEKKGIRWGIFVEQRNAVVEDCLLVLRDLSTRKDTRLPAHEVRRRMAAEG.

Belongs to the class-II aminoacyl-tRNA synthetase family. Homodimer.

Its subcellular location is the cytoplasm. The catalysed reaction is tRNA(His) + L-histidine + ATP = L-histidyl-tRNA(His) + AMP + diphosphate + H(+). The chain is Histidine--tRNA ligase (hisS) from Treponema pallidum (strain Nichols).